Reading from the N-terminus, the 699-residue chain is uncharacterized protein (699 aa).

Disordered regions lie at residues 175–208 (PTLGVSEFPSKHGDHSDSKTYESPISNSQAASLS), 289–364 (PTAK…EEPD), and 539–603 (RAKE…KEYL). Residues 183-194 (PSKHGDHSDSKT) are compositionally biased toward basic and acidic residues. Polar residues predominate over residues 195-208 (YESPISNSQAASLS). The segment covering 308–322 (SKHKKRPKRLSKFKQ) has biased composition (basic residues). The span at 323–338 (AKLETKKSGNKDHATS) shows a compositional bias: basic and acidic residues. 2 stretches are compositionally biased toward polar residues: residues 339 to 360 (SEKLSLGNESIHSINETRSSSI) and 548 to 573 (HSNATCTIKNDDLSNTLNNRAANTKL). Positions 574 to 603 (NPKEEDKSTVESELKAPPKEKSSETSKEYL) are enriched in basic and acidic residues.

The protein resides in the cytoplasm. This is an uncharacterized protein from Schizosaccharomyces pombe (strain 972 / ATCC 24843) (Fission yeast).